The sequence spans 489 residues: Cysteine--tRNA ligase (489 aa).

Zn(2+) is bound at residue Cys-27. Positions 29–39 match the 'HIGH' region motif; sequence VTVYDLCHLGH. Cys-211, His-236, and Glu-240 together coordinate Zn(2+). The 'KMSKS' region signature appears at 268–272; it reads KMSKS. Residue Lys-271 participates in ATP binding.

Belongs to the class-I aminoacyl-tRNA synthetase family. Monomer. Requires Zn(2+) as cofactor.

It is found in the cytoplasm. It catalyses the reaction tRNA(Cys) + L-cysteine + ATP = L-cysteinyl-tRNA(Cys) + AMP + diphosphate. The sequence is that of Cysteine--tRNA ligase from Prochlorococcus marinus (strain MIT 9312).